The chain runs to 176 residues: Isopentenyl-diphosphate Delta-isomerase (176 aa).

Mn(2+) contacts are provided by histidine 22 and histidine 28. The region spanning 26-160 (LRHKAVSVFV…PDRYTPWLRI (135 aa)) is the Nudix hydrolase domain. Cysteine 62 is a catalytic residue. Histidine 64 contributes to the Mn(2+) binding site. Glutamate 82 serves as a coordination point for Mg(2+). Glutamate 108 and glutamate 110 together coordinate Mn(2+). Glutamate 110 is an active-site residue.

Belongs to the IPP isomerase type 1 family. Requires Mg(2+) as cofactor. It depends on Mn(2+) as a cofactor.

The protein resides in the cytoplasm. It carries out the reaction isopentenyl diphosphate = dimethylallyl diphosphate. The protein operates within isoprenoid biosynthesis; dimethylallyl diphosphate biosynthesis; dimethylallyl diphosphate from isopentenyl diphosphate: step 1/1. It participates in porphyrin-containing compound metabolism; chlorophyll biosynthesis. In terms of biological role, catalyzes the 1,3-allylic rearrangement of the homoallylic substrate isopentenyl (IPP) to its highly electrophilic allylic isomer, dimethylallyl diphosphate (DMAPP). This is Isopentenyl-diphosphate Delta-isomerase from Roseobacter denitrificans (strain ATCC 33942 / OCh 114) (Erythrobacter sp. (strain OCh 114)).